Here is a 96-residue protein sequence, read N- to C-terminus: Co-chaperonin GroES (96 aa).

The protein belongs to the GroES chaperonin family. Heptamer of 7 subunits arranged in a ring. Interacts with the chaperonin GroEL.

It localises to the cytoplasm. In terms of biological role, together with the chaperonin GroEL, plays an essential role in assisting protein folding. The GroEL-GroES system forms a nano-cage that allows encapsulation of the non-native substrate proteins and provides a physical environment optimized to promote and accelerate protein folding. GroES binds to the apical surface of the GroEL ring, thereby capping the opening of the GroEL channel. This chain is Co-chaperonin GroES, found in Alcanivorax borkumensis (strain ATCC 700651 / DSM 11573 / NCIMB 13689 / SK2).